Reading from the N-terminus, the 341-residue chain is Retinol dehydrogenase 10 (341 aa).

Residues 3–23 (IVLEFFLVTFKVLWAFVLAAA) traverse the membrane as a helical; Signal-anchor segment. Position 40-64 (40-64 (LITGAGSGLGRLFALEFARRRAQLV)) interacts with NADP(+). Serine 197 contributes to the substrate binding site. The active-site Proton acceptor is the tyrosine 210.

Belongs to the short-chain dehydrogenases/reductases (SDR) family.

The protein localises to the microsome membrane. It localises to the endoplasmic reticulum membrane. It catalyses the reaction all-trans-retinol + NADP(+) = all-trans-retinal + NADPH + H(+). The protein operates within cofactor metabolism; retinol metabolism. In terms of biological role, retinol dehydrogenase with a clear preference for NADP. Converts all-trans-retinol to all-trans-retinal. Has no detectable activity towards 11-cis-retinol, 9-cis-retinol and 13-cis-retinol. The chain is Retinol dehydrogenase 10 (rdh10) from Xenopus tropicalis (Western clawed frog).